Consider the following 743-residue polypeptide: 1,4-alpha-glucan branching enzyme GlgB (743 aa).

Catalysis depends on Asp-416, which acts as the Nucleophile. The active-site Proton donor is Glu-469.

The protein belongs to the glycosyl hydrolase 13 family. GlgB subfamily. Monomer.

It carries out the reaction Transfers a segment of a (1-&gt;4)-alpha-D-glucan chain to a primary hydroxy group in a similar glucan chain.. It functions in the pathway glycan biosynthesis; glycogen biosynthesis. Catalyzes the formation of the alpha-1,6-glucosidic linkages in glycogen by scission of a 1,4-alpha-linked oligosaccharide from growing alpha-1,4-glucan chains and the subsequent attachment of the oligosaccharide to the alpha-1,6 position. The polypeptide is 1,4-alpha-glucan branching enzyme GlgB (Shewanella baltica (strain OS185)).